A 1335-amino-acid polypeptide reads, in one-letter code: Bifunctional autolysin (1335 aa).

The signal sequence occupies residues 1-29 (MAKKFNYKLPSMVALTLFGTAFTAHQANA). 3 disordered regions span residues 51-88 (QAEK…QSTT), 100-262 (NEIS…KYKE), and 514-535 (WGTT…NNKL). Composition is skewed to polar residues over residues 58 to 88 (EVTQ…QSTT), 100 to 127 (NEIS…VTKN), 143 to 155 (TDTN…QSVA), 176 to 223 (TASQ…NASG), and 244 to 258 (SLNN…TTSY). The N-acetylmuramoyl-L-alanine amidase stretch occupies residues 303 to 863 (VSSQKTSSLP…LSTQSTPAPK (561 aa)). Residues 515 to 531 (GTTSTKPSQPSKPSGGT) show a composition bias toward low complexity. 7 consecutive GW domains span residues 533 to 610 (NKLT…YNTA), 612 to 686 (APVK…TASK), 700 to 774 (TVTN…YNTA), 776 to 850 (SPVK…APSK), 868 to 943 (STQT…TQNI), 945 to 1020 (KQTQ…QNST), and 1023 to 1096 (QSTP…KEKI). The tract at residues 864 to 1335 (QVKPSTQTVN…GKYFEIPTYK (472 aa)) is endo-beta-N-acetylglucosaminidase.

It in the N-terminal section; belongs to the N-acetylmuramoyl-L-alanine amidase 2 family. The protein in the C-terminal section; belongs to the glycosyl hydrolase 73 family. Oligomer; forms a ring structure at the cell surface which is important for efficient partitioning of daughter cells after cell division. Post-translationally, undergoes proteolytic processing to generate the two extracellular lytic enzymes, probably at the septal region on the cell surface.

It localises to the secreted. The enzyme catalyses Hydrolyzes the link between N-acetylmuramoyl residues and L-amino acid residues in certain cell-wall glycopeptides.. It catalyses the reaction an N(4)-(oligosaccharide-(1-&gt;3)-[oligosaccharide-(1-&gt;6)]-beta-D-Man-(1-&gt;4)-beta-D-GlcNAc-(1-&gt;4)-alpha-D-GlcNAc)-L-asparaginyl-[protein] + H2O = an oligosaccharide-(1-&gt;3)-[oligosaccharide-(1-&gt;6)]-beta-D-Man-(1-&gt;4)-D-GlcNAc + N(4)-(N-acetyl-beta-D-glucosaminyl)-L-asparaginyl-[protein]. In terms of biological role, endohydrolysis of the di-N-acetylchitobiosyl unit in high-mannose glycopeptides and glycoproteins containing the -[(Man)5(GlcNAc)2]-Asn structure. One N-acetyl-D-glucosamine residue remains attached to the protein; the rest of the oligosaccharide is released intact. Cleaves the peptidoglycan connecting the daughter cells at the end of the cell division cycle, resulting in the separation of the two newly divided cells. Acts as an autolysin in penicillin-induced lysis. As a bacterial surface-associated protein, mediates attachment to polystyrene surfaces, contributing to biofilm formation. Also has vitronectin-binding activity. The chain is Bifunctional autolysin (atl) from Staphylococcus epidermidis.